Here is a 350-residue protein sequence, read N- to C-terminus: Anthranilate phosphoribosyltransferase (350 aa).

Residues G94, 97–98 (GD), T102, 104–107 (NIST), 122–130 (KHGNRSVSS), and S134 contribute to the 5-phospho-alpha-D-ribose 1-diphosphate site. An anthranilate-binding site is contributed by G94. Position 106 (S106) interacts with Mg(2+). Position 125 (N125) interacts with anthranilate. Residue R180 coordinates anthranilate. Mg(2+) contacts are provided by D239 and E240.

It belongs to the anthranilate phosphoribosyltransferase family. Homodimer. It depends on Mg(2+) as a cofactor.

It carries out the reaction N-(5-phospho-beta-D-ribosyl)anthranilate + diphosphate = 5-phospho-alpha-D-ribose 1-diphosphate + anthranilate. The protein operates within amino-acid biosynthesis; L-tryptophan biosynthesis; L-tryptophan from chorismate: step 2/5. In terms of biological role, catalyzes the transfer of the phosphoribosyl group of 5-phosphorylribose-1-pyrophosphate (PRPP) to anthranilate to yield N-(5'-phosphoribosyl)-anthranilate (PRA). This chain is Anthranilate phosphoribosyltransferase, found in Geotalea daltonii (strain DSM 22248 / JCM 15807 / FRC-32) (Geobacter daltonii).